Consider the following 661-residue polypeptide: UvrABC system protein C (661 aa).

One can recognise a GIY-YIG domain in the interval 25-104 (AEPGCYLMRD…IKNHQPHFNV (80 aa)). The UVR domain occupies 214 to 249 (DELQHLLQEQMERYAERMDYESAARVRDQLQGLDQL). A compositionally biased stretch (basic and acidic residues) spans 636–652 (FFHPSDEGTDADARAAL). The tract at residues 636-661 (FFHPSDEGTDADARAALEEQPQELSA) is disordered.

The protein belongs to the UvrC family. In terms of assembly, interacts with UvrB in an incision complex.

It localises to the cytoplasm. Its function is as follows. The UvrABC repair system catalyzes the recognition and processing of DNA lesions. UvrC both incises the 5' and 3' sides of the lesion. The N-terminal half is responsible for the 3' incision and the C-terminal half is responsible for the 5' incision. This chain is UvrABC system protein C, found in Synechococcus sp. (strain CC9605).